The primary structure comprises 416 residues: Cell division control protein 3 (416 aa).

A Septin-type G domain is found at 32 to 307 (RGFSLNIMAI…ENYRTEKLKR (276 aa)). Residues 42–49 (GESGLGKA) form a G1 motif region. GTP contacts are provided by residues 42 to 49 (GESGLGKA), Ser79, Gly105, 184 to 192 (KSDTLTDEE), Gly240, and Arg256. Residues 102-105 (TAPG) form a G3 motif region. Residues 183–186 (AKSD) are G4 motif. Residues 323-399 (AAKQEEERAL…QLEKQKLLPQ (77 aa)) adopt a coiled-coil conformation. The segment at 392-416 (EKQKLLPQDPPAQPAPQKSRKGFLR) is disordered.

Belongs to the TRAFAC class TrmE-Era-EngA-EngB-Septin-like GTPase superfamily. Septin GTPase family.

The protein resides in the bud neck. Its function is as follows. Plays a role in the cell cycle. Involved in the formation of the ring of filaments in the neck region at the mother-bud junction during mitosis. The protein is Cell division control protein 3 (CDC3) of Candida albicans (Yeast).